Consider the following 278-residue polypeptide: MEACPHIRYAFQNDKLLLQQASVGRLTLVNKTTILLRPMKTTTVDLGLYARPPEGHGLMLWGSTSRPVTSHVGIIDPGYTGELRLILQNQRRYNSTLRPSELKIHLAAFRYATPQMEEDKGPINHPQYPGDVGLDVSLPKDLALFPHQTVSVTLTVPPPSIPHHRPTIFGRSGLAMQGILVKPCRWRRGGVDVSLTNFSDQTVFLNKYRRFCQLVYLHKHHLTSFYSPHSDAGVLGPRSLFRWASCAFEEVPGLAMGDSGLSEALEGRQGRGFGSSGQ.

Substrate-binding positions include 171–173 and 273–274; these read RSG and FG.

It belongs to the dUTPase family. Mg(2+) is required as a cofactor.

It carries out the reaction dUTP + H2O = dUMP + diphosphate + H(+). Involved in nucleotide metabolism: produces dUMP, the immediate precursor of thymidine nucleotides and decreases the intracellular concentration of dUTP to avoid uracil incorporation into viral DNA. This Homo sapiens (Human) protein is Deoxyuridine 5'-triphosphate nucleotidohydrolase.